The sequence spans 352 residues: Phosphatase Herzog (352 aa).

The tract at residues 1–102 is prion-like domain necessary for both protein assembly and membrane targeting; that stretch reads MDATSIITQV…PLPDQQRYLL (102 aa). Residues 103–267 are mediates substrate recognition; sequence PQVRLTDMHR…ELIPLFEKLS (165 aa). In terms of domain architecture, FCP1 homology spans 108–266; it reads TDMHRKCMVI…RELIPLFEKL (159 aa). Disordered stretches follow at residues 284–310 and 332–352; these read NNQT…LQQQ and TMLN…LQKT.

Monomer. Forms higher-order protein aggregates with amyloid-like features during gastrulation. Interacts with babo, dah, Irk1, pch2, Ras64B, sax and Src64B.

Its subcellular location is the cell membrane. It carries out the reaction O-phospho-L-seryl-[protein] + H2O = L-seryl-[protein] + phosphate. Its activity is regulated as follows. Phosphatase activity requires amyloid-like aggregation on the membrane. In terms of biological role, prion-like membrane-associated phosphatase. Phosphatase activity depends on amyloid-like assembly at the membrane. Might have a role in establishment of segment polarity in embryos. The sequence is that of Phosphatase Herzog from Drosophila melanogaster (Fruit fly).